Consider the following 212-residue polypeptide: Peptide methionine sulfoxide reductase MsrA (212 aa).

Cys52 is a catalytic residue.

The protein belongs to the MsrA Met sulfoxide reductase family.

The enzyme catalyses L-methionyl-[protein] + [thioredoxin]-disulfide + H2O = L-methionyl-(S)-S-oxide-[protein] + [thioredoxin]-dithiol. It carries out the reaction [thioredoxin]-disulfide + L-methionine + H2O = L-methionine (S)-S-oxide + [thioredoxin]-dithiol. In terms of biological role, has an important function as a repair enzyme for proteins that have been inactivated by oxidation. Catalyzes the reversible oxidation-reduction of methionine sulfoxide in proteins to methionine. This is Peptide methionine sulfoxide reductase MsrA from Yersinia enterocolitica serotype O:8 / biotype 1B (strain NCTC 13174 / 8081).